Here is a 108-residue protein sequence, read N- to C-terminus: UPF0060 membrane protein amb3269 (108 aa).

A run of 4 helical transmembrane segments spans residues 4–24 (IPTYILAAFAEIGGCFAFWAW), 31–51 (PLWLVPGMASLGLFAWALTRI), 59–79 (AYAAYGGIYILASLIWMWAVE), and 85–105 (RWDTIGAAICVVGAMVIIFGP).

The protein belongs to the UPF0060 family.

It is found in the cell inner membrane. This is UPF0060 membrane protein amb3269 from Paramagnetospirillum magneticum (strain ATCC 700264 / AMB-1) (Magnetospirillum magneticum).